Consider the following 139-residue polypeptide: Large ribosomal subunit protein uL16 (139 aa).

This sequence belongs to the universal ribosomal protein uL16 family. In terms of assembly, part of the 50S ribosomal subunit.

Its function is as follows. Binds 23S rRNA and is also seen to make contacts with the A and possibly P site tRNAs. The polypeptide is Large ribosomal subunit protein uL16 (Chlorobium chlorochromatii (strain CaD3)).